The chain runs to 93 residues: U12-lycotoxin-Ls1b (93 aa).

The signal sequence occupies residues 1–18 (MKFAVILLFSLVVLAVAS). Positions 19-38 (ESVEEVRREIDIEDLPEQQR) are excised as a propeptide.

Belongs to the neurotoxin 31 family. Contains 5 disulfide bonds. In terms of tissue distribution, expressed by the venom gland.

Its subcellular location is the secreted. The polypeptide is U12-lycotoxin-Ls1b (Lycosa singoriensis (Wolf spider)).